Consider the following 535-residue polypeptide: CTP synthase (535 aa).

Positions Met1–Leu268 are amidoligase domain. Residue Ser14 coordinates CTP. Ser14 is a UTP binding site. Residue Ser15–Ile20 coordinates ATP. An L-glutamine-binding site is contributed by Tyr55. Asp72 contacts ATP. Residues Asp72 and Glu142 each coordinate Mg(2+). CTP contacts are provided by residues Asp149–Glu151, Lys189–Gln194, and Lys225. Residues Lys189 to Gln194 and Lys225 each bind UTP. Residues Lys293–Asn535 enclose the Glutamine amidotransferase type-1 domain. L-glutamine is bound at residue Gly355. Residue Cys382 is the Nucleophile; for glutamine hydrolysis of the active site. Residues Leu383 to Gln386, Glu406, and Arg464 each bind L-glutamine. Active-site residues include His509 and Glu511.

It belongs to the CTP synthase family. Homotetramer.

The catalysed reaction is UTP + L-glutamine + ATP + H2O = CTP + L-glutamate + ADP + phosphate + 2 H(+). The enzyme catalyses L-glutamine + H2O = L-glutamate + NH4(+). It carries out the reaction UTP + NH4(+) + ATP = CTP + ADP + phosphate + 2 H(+). The protein operates within pyrimidine metabolism; CTP biosynthesis via de novo pathway; CTP from UDP: step 2/2. Its activity is regulated as follows. Allosterically activated by GTP, when glutamine is the substrate; GTP has no effect on the reaction when ammonia is the substrate. The allosteric effector GTP functions by stabilizing the protein conformation that binds the tetrahedral intermediate(s) formed during glutamine hydrolysis. Inhibited by the product CTP, via allosteric rather than competitive inhibition. Functionally, catalyzes the ATP-dependent amination of UTP to CTP with either L-glutamine or ammonia as the source of nitrogen. Regulates intracellular CTP levels through interactions with the four ribonucleotide triphosphates. This Streptococcus pneumoniae (strain ATCC BAA-255 / R6) protein is CTP synthase.